The chain runs to 444 residues: Inward rectifier potassium channel 4 (444 aa).

The Cytoplasmic portion of the chain corresponds to 1-55 (MHGHNRNGQAHVPRRKRRNRFVKKNGQCNVYFANLSNKSQRYMADIFTTCVDTRW). The helical transmembrane segment at 56-80 (RYMLMLFSAAFLVSWLFFGLLFWCI) threads the bilayer. Residues 81 to 119 (AFFHGDLEASPSVPAAGAPGGNGGAAPAAPKPCIMHVNG) are Extracellular-facing. Positions 120–131 (FLGAFLFSVETQ) form an intramembrane region, helical; Pore-forming. An intramembrane region (pore-forming) is located at residues 132–138 (TTIGYGF). A Selectivity filter motif is present at residues 133-138 (TIGYGF). Over 139 to 147 (RCVTEECPL) the chain is Extracellular. A helical transmembrane segment spans residues 148-169 (AVIAVVVQSIVGCVIDSFMIGT). Residues 170–444 (IMAKMARPKK…NISYRRESAI (275 aa)) are Cytoplasmic-facing. The short motif at 442–444 (SAI) is the PDZ-binding element.

Belongs to the inward rectifier-type potassium channel (TC 1.A.2.1) family. KCNJ4 subfamily. In terms of assembly, homomultimeric and heteromultimeric association with KCNJ2 and KCNJ12. Interacts with DLG2 and DLG4. Associates, via its PDZ-recognition domain, with a complex containing LIN7A, LIN7B, LIN7C, DLG1, CASK and APBA1. Interacts with TAX1BP3. TAX1BP3 competes with LIN7 family members for KCNJ4 binding.

The protein localises to the cell membrane. The protein resides in the postsynaptic cell membrane. It localises to the cytoplasmic vesicle membrane. It carries out the reaction K(+)(in) = K(+)(out). Functionally, inward rectifier potassium channels are characterized by a greater tendency to allow potassium to flow into the cell rather than out of it. Their voltage dependence is regulated by the concentration of extracellular potassium; as external potassium is raised, the voltage range of the channel opening shifts to more positive voltages. The inward rectification is mainly due to the blockage of outward current by internal magnesium. Can be blocked by extracellular barium and cesium. This is Inward rectifier potassium channel 4 (KCNJ4) from Mesocricetus auratus (Golden hamster).